The primary structure comprises 224 residues: Putative carbamate hydrolase RutD (224 aa).

One can recognise an AB hydrolase-1 domain in the interval 14–115 (PVVVLISGLG…TVLVSVNGWL (102 aa)).

The protein belongs to the AB hydrolase superfamily. Hydrolase RutD family.

It carries out the reaction carbamate + 2 H(+) = NH4(+) + CO2. Functionally, involved in pyrimidine catabolism. May facilitate the hydrolysis of carbamate, a reaction that can also occur spontaneously. This is Putative carbamate hydrolase RutD from Shigella dysenteriae serotype 1 (strain Sd197).